Reading from the N-terminus, the 1107-residue chain is DNA-directed RNA polymerase subunit beta (1107 aa).

Residues Asp1062 to Gly1075 show a composition bias toward basic and acidic residues. A disordered region spans residues Asp1062–Asn1081.

The protein belongs to the RNA polymerase beta chain family. The RNAP catalytic core consists of 2 alpha, 1 beta, 1 beta' and 1 omega subunit. When a sigma factor is associated with the core the holoenzyme is formed, which can initiate transcription.

It catalyses the reaction RNA(n) + a ribonucleoside 5'-triphosphate = RNA(n+1) + diphosphate. In terms of biological role, DNA-dependent RNA polymerase catalyzes the transcription of DNA into RNA using the four ribonucleoside triphosphates as substrates. The polypeptide is DNA-directed RNA polymerase subunit beta (Syntrophomonas wolfei subsp. wolfei (strain DSM 2245B / Goettingen)).